The primary structure comprises 172 residues: Myosin regulatory light chain 2, smooth muscle minor isoform (172 aa).

Ser2 carries the N-acetylserine modification. A Phosphothreonine; by MLCK modification is found at Thr19. Ser20 carries the phosphoserine; by MLCK modification. EF-hand domains are found at residues 29-64 (SQIQ…LGKN), 98-133 (DPED…MGDR), and 134-169 (FTDE…GAKD). Positions 42, 44, 46, and 53 each coordinate Ca(2+).

Myosin is a hexamer of 2 heavy chains and 4 light chains. Phosphorylation increases the actin-activated myosin ATPase activity and thereby regulates the contractile activity.

Functionally, myosin regulatory subunit that plays an important role in regulation of both smooth muscle and nonmuscle cell contractile activity. Implicated in cytokinesis, receptor capping, and cell locomotion. In Gallus gallus (Chicken), this protein is Myosin regulatory light chain 2, smooth muscle minor isoform.